The sequence spans 403 residues: Palmitoyltransferase ZDHHC23-A (403 aa).

The Cytoplasmic segment spans residues Met-1–Thr-70. The chain crosses the membrane as a helical span at residues Val-71–Leu-91. Residue Arg-92 is a topological domain, lumenal. A helical transmembrane segment spans residues Val-93 to Leu-113. The Cytoplasmic portion of the chain corresponds to Trp-114–Arg-125. The helical transmembrane segment at Thr-126 to Thr-146 threads the bilayer. Over Glu-147–Asp-153 the chain is Lumenal. Residues Val-154–Val-174 traverse the membrane as a helical segment. Over Arg-175–Arg-268 the chain is Cytoplasmic. One can recognise a DHHC domain in the interval Lys-225–Leu-275. Cys-255 functions as the S-palmitoyl cysteine intermediate in the catalytic mechanism. The chain crosses the membrane as a helical span at residues Gln-269–Leu-289. Over Arg-290 to Thr-319 the chain is Lumenal. The chain crosses the membrane as a helical span at residues Cys-320 to Ile-340. Over Asn-341–Val-403 the chain is Cytoplasmic.

This sequence belongs to the DHHC palmitoyltransferase family.

Its subcellular location is the golgi apparatus membrane. It is found in the golgi apparatus. The protein resides in the trans-Golgi network membrane. It carries out the reaction L-cysteinyl-[protein] + hexadecanoyl-CoA = S-hexadecanoyl-L-cysteinyl-[protein] + CoA. Its function is as follows. Palmitoyltransferase that could catalyze the addition of palmitate onto various protein substrates and be involved in a variety of cellular processes. In Danio rerio (Zebrafish), this protein is Palmitoyltransferase ZDHHC23-A (zdhhc23a).